A 214-amino-acid chain; its full sequence is Pyridoxine/pyridoxamine 5'-phosphate oxidase (214 aa).

Residues 8–11 (RINY) and Lys-66 each bind substrate. FMN-binding positions include 61-66 (RIVLVK), 76-77 (FT), Arg-82, Lys-83, and Gln-105. The substrate site is built by Tyr-123, Arg-127, and Ser-131. FMN-binding positions include 140–141 (QS) and Trp-184. A substrate-binding site is contributed by 190 to 192 (RLH). Arg-194 lines the FMN pocket.

This sequence belongs to the pyridoxamine 5'-phosphate oxidase family. Homodimer. The cofactor is FMN.

It carries out the reaction pyridoxamine 5'-phosphate + O2 + H2O = pyridoxal 5'-phosphate + H2O2 + NH4(+). The catalysed reaction is pyridoxine 5'-phosphate + O2 = pyridoxal 5'-phosphate + H2O2. It participates in cofactor metabolism; pyridoxal 5'-phosphate salvage; pyridoxal 5'-phosphate from pyridoxamine 5'-phosphate: step 1/1. It functions in the pathway cofactor metabolism; pyridoxal 5'-phosphate salvage; pyridoxal 5'-phosphate from pyridoxine 5'-phosphate: step 1/1. In terms of biological role, catalyzes the oxidation of either pyridoxine 5'-phosphate (PNP) or pyridoxamine 5'-phosphate (PMP) into pyridoxal 5'-phosphate (PLP). The protein is Pyridoxine/pyridoxamine 5'-phosphate oxidase of Burkholderia multivorans (strain ATCC 17616 / 249).